Consider the following 279-residue polypeptide: Troponin T, fast skeletal muscle (279 aa).

Acidic residues predominate over residues 1-21 (MSDEEVEHVEEQYEEEEEAQE). A disordered region spans residues 1–82 (MSDEEVEHVE…EKVDFDDIQK (82 aa)). Position 2 is an N-acetylserine (Ser2). The residue at position 2 (Ser2) is a Phosphoserine. 2 stretches are compositionally biased toward basic and acidic residues: residues 28–49 (EVHE…ALED) and 70–82 (PEGE…DIQK). Phosphoserine is present on Ser98. Residues 121 to 163 (RAERAEQQRIRAEKERERQNRLAEEKARREEEDAKRRAEEDLK) are compositionally biased toward basic and acidic residues. Positions 121–200 (RAERAEQQRI…TAREMKKKIL (80 aa)) are disordered. Residues Ser169, Ser176, and Ser177 each carry the phosphoserine modification. A compositionally biased stretch (basic and acidic residues) spans 191 to 200 (TAREMKKKIL). Ser213 carries the post-translational modification Phosphoserine. Tyr229 bears the Phosphotyrosine mark.

This sequence belongs to the troponin T family.

Functionally, troponin T is the tropomyosin-binding subunit of troponin, the thin filament regulatory complex which confers calcium-sensitivity to striated muscle actomyosin ATPase activity. This chain is Troponin T, fast skeletal muscle (TNNT3), found in Oryctolagus cuniculus (Rabbit).